The following is a 394-amino-acid chain: Elongation factor Tu (394 aa).

In terms of domain architecture, tr-type G spans 10–204 (KPHVNVGTIG…ALDTYIPEPE (195 aa)). Positions 19-26 (GHVDHGKT) are G1. 19–26 (GHVDHGKT) contributes to the GTP binding site. Thr-26 lines the Mg(2+) pocket. Residues 60–64 (GITIN) are G2. The interval 81 to 84 (DCPG) is G3. Residues 81–85 (DCPGH) and 136–139 (NKCD) contribute to the GTP site. The interval 136 to 139 (NKCD) is G4. Residues 174–176 (SAL) form a G5 region.

This sequence belongs to the TRAFAC class translation factor GTPase superfamily. Classic translation factor GTPase family. EF-Tu/EF-1A subfamily. In terms of assembly, monomer.

Its subcellular location is the cytoplasm. The enzyme catalyses GTP + H2O = GDP + phosphate + H(+). In terms of biological role, GTP hydrolase that promotes the GTP-dependent binding of aminoacyl-tRNA to the A-site of ribosomes during protein biosynthesis. This Shewanella sediminis (strain HAW-EB3) protein is Elongation factor Tu.